The sequence spans 186 residues: NADH-dependent FMN reductase SfnE (186 aa).

This sequence belongs to the SsuE family.

It carries out the reaction FMNH2 + NAD(+) = FMN + NADH + 2 H(+). Functionally, involved in the dimethyl sulfide degradation pathway. Catalyzes the NADH-dependent reduction of FMN. This Pseudomonas putida (Arthrobacter siderocapsulatus) protein is NADH-dependent FMN reductase SfnE.